The primary structure comprises 317 residues: L-lactate dehydrogenase 1 (317 aa).

Residues V17, D38, K43, Y69, and 83–84 (GA) each bind NAD(+). Substrate is bound by residues Q86 and R92. Residues S105, 122–124 (ATN), and S147 each bind NAD(+). Position 124-127 (124-127 (NPVD)) interacts with substrate. 152–155 (DSAR) is a substrate binding site. The active-site Proton acceptor is H179. Y223 carries the phosphotyrosine modification. Substrate is bound at residue T232.

This sequence belongs to the LDH/MDH superfamily. LDH family. Homotetramer.

The protein resides in the cytoplasm. It catalyses the reaction (S)-lactate + NAD(+) = pyruvate + NADH + H(+). It participates in fermentation; pyruvate fermentation to lactate; (S)-lactate from pyruvate: step 1/1. In terms of biological role, catalyzes the conversion of lactate to pyruvate (Potential). Appears to be the primary factor that allows S.aureus growth during nitrosative stress in both aerobically and anaerobically cultured cells. In Staphylococcus aureus (strain USA300), this protein is L-lactate dehydrogenase 1.